We begin with the raw amino-acid sequence, 347 residues long: Phosphoribosylformylglycinamidine cyclo-ligase (347 aa).

Belongs to the AIR synthase family.

The protein localises to the cytoplasm. It catalyses the reaction 2-formamido-N(1)-(5-O-phospho-beta-D-ribosyl)acetamidine + ATP = 5-amino-1-(5-phospho-beta-D-ribosyl)imidazole + ADP + phosphate + H(+). Its pathway is purine metabolism; IMP biosynthesis via de novo pathway; 5-amino-1-(5-phospho-D-ribosyl)imidazole from N(2)-formyl-N(1)-(5-phospho-D-ribosyl)glycinamide: step 2/2. In Dechloromonas aromatica (strain RCB), this protein is Phosphoribosylformylglycinamidine cyclo-ligase.